A 522-amino-acid polypeptide reads, in one-letter code: Glutamate--cysteine ligase (522 aa).

The protein belongs to the glutamate--cysteine ligase type 1 family. Type 1 subfamily.

The catalysed reaction is L-cysteine + L-glutamate + ATP = gamma-L-glutamyl-L-cysteine + ADP + phosphate + H(+). The protein operates within sulfur metabolism; glutathione biosynthesis; glutathione from L-cysteine and L-glutamate: step 1/2. This chain is Glutamate--cysteine ligase, found in Shewanella pealeana (strain ATCC 700345 / ANG-SQ1).